Consider the following 464-residue polypeptide: Methionine aminopeptidase 2-2 (464 aa).

Residues methionine 1–proline 106 form a disordered region. A compositionally biased stretch (acidic residues) spans glutamate 37–aspartate 53. Positions proline 70 to serine 86 are enriched in basic residues. Residue histidine 216 coordinates substrate. A divalent metal cation is bound by residues aspartate 237, aspartate 248, and histidine 317. Histidine 325 is a binding site for substrate. Positions 350 and 445 each coordinate a divalent metal cation.

This sequence belongs to the peptidase M24A family. Methionine aminopeptidase eukaryotic type 2 subfamily. Requires Co(2+) as cofactor. Zn(2+) serves as cofactor. Mn(2+) is required as a cofactor. The cofactor is Fe(2+).

The protein localises to the cytoplasm. It carries out the reaction Release of N-terminal amino acids, preferentially methionine, from peptides and arylamides.. Its function is as follows. Cotranslationally removes the N-terminal methionine from nascent proteins. The N-terminal methionine is often cleaved when the second residue in the primary sequence is small and uncharged (Met-Ala-, Cys, Gly, Pro, Ser, Thr, or Val). The polypeptide is Methionine aminopeptidase 2-2 (Talaromyces stipitatus (strain ATCC 10500 / CBS 375.48 / QM 6759 / NRRL 1006) (Penicillium stipitatum)).